We begin with the raw amino-acid sequence, 206 residues long: Dephospho-CoA kinase (206 aa).

The region spanning 4–200 is the DPCK domain; it reads IVALTGGIGS…AHYLQLASQF (197 aa). 12–17 is an ATP binding site; sequence GSGKST.

This sequence belongs to the CoaE family.

The protein resides in the cytoplasm. The enzyme catalyses 3'-dephospho-CoA + ATP = ADP + CoA + H(+). It functions in the pathway cofactor biosynthesis; coenzyme A biosynthesis; CoA from (R)-pantothenate: step 5/5. Catalyzes the phosphorylation of the 3'-hydroxyl group of dephosphocoenzyme A to form coenzyme A. This chain is Dephospho-CoA kinase, found in Shigella boydii serotype 4 (strain Sb227).